A 491-amino-acid chain; its full sequence is Immediate early protein IE1 (491 aa).

A compositionally biased stretch (basic and acidic residues) spans 1–11; sequence MESSAKRKMDP. The nuclear localization signal stretch occupies residues 1–24; that stretch reads MESSAKRKMDPDNPDEGPSSKVPR. Residues 1–30 form a disordered region; it reads MESSAKRKMDPDNPDEGPSSKVPRPETPVT. Residues 132 to 346 are interaction with host PML, interference with PML sumoylation and disruption of PML-associated nuclear bodies; it reads ILDKVHEPFE…SVMKRRIEEI (215 aa). Residues 373–445 form an interaction with host STAT2 region; sequence AIAEESDEEE…EEGAQEERED (73 aa). Residues 410–420 are modulation of STAT3/STAT1 signaling; it reads ATIPLSSVIVA. The tract at residues 410–445 is interaction with host STAT3; it reads ATIPLSSVIVAENSDQEESEQSDEEEEEGAQEERED. An acidic region spans residues 421-472; it reads ENSDQEESEQSDEEEEEGAQEEREDTVSVKSEPVSEIEEVAPEEEEDGAEEP. The tract at residues 421–491 is disordered; that stretch reads ENSDQEESEQ…PMVTRSKADQ (71 aa). The segment covering 423 to 444 has biased composition (acidic residues); it reads SDQEESEQSDEEEEEGAQEERE. Residues 449–452 are interaction with host SUMO1; it reads VKSE. Residue K450 forms a Glycyl lysine isopeptide (Lys-Gly) (interchain with G-Cter in SUMO) linkage. Residues 455–470 show a composition bias toward acidic residues; that stretch reads SEIEEVAPEEEEDGAE. Residues 475-491 are chromosome-tethering domain (CTD), binding to histones; that stretch reads SGGKSTHPMVTRSKADQ.

This sequence belongs to the HHV-5 IE1 protein family. In terms of assembly, forms homodimers. Interacts with human p53/TP53; this interaction inhibits p53/TP53-dependent transactivation activity. Interacts with host STAT1. Interacts with host STAT2; this interaction promotes viral growth and counteracts the antiviral interferon response. May also interact with the host STAT1-STAT2 heterodimer. Interacts with host STAT3; this interaction leads to STAT3 nuclear accumulation and disruption of IL6-induced STAT3 phosphorylation. Interacts with host PML; this interaction inhibits host PML de novo sumoylation and probably inhibits PML regulation of type I and type II interferon-induced gene expression. Interacts with host DAXX. Interacts with host SP100. Interacts with host E2F1. Interacts with host RB1. Interacts with host HDAC1; this interaction inhibits histone deacetylation and promotes viral transcription. Interacts with host HDAC2; this interaction inhibits histone deacetylation and promotes viral transcription. Interacts with host HDAC3; this interaction inhibits histone deacetylation and promotes viral transcription. Interacts with host PLSCR1; this interaction inhibits IE1 transactivating activity. Sumoylated by host PML/nuclear domain 10. Sumoylation abolishes the interaction with host STAT2 and thus the IE1-mediated repression of interferon-stimulated genes.

The protein resides in the host nucleus. Plays an important role in transactivating viral early genes as well as activating its own promoter, probably by altering the viral chromatin structure. Expression of IE1 and IE2 proteins is critical for the establishment of lytic infection and reactivation from viral latency. Disrupts PML-associated ND10 nuclear bodies by interfering with host PML and SP100 sumoylation thereby altering the regulation of type I and type II interferon-induced gene expression. Promotes efficient viral growth by interacting with and directing host SP100 to degradation, leading to enhanced acetylation level of histones. In addition, functions in counteracting the host innate antiviral response. Inhibits the type I interferon pathway by directly interacting with and sequestrating host STAT2. Also targets type II interferon pathway by repressing IL6- and STAT3 target genes. Repression of STAT3 genes is due to STAT3 nuclear accumulation and disruption of IL6-induced STAT3 phosphorylation by IE1. This repression is followed by phosphorylation and activation of STAT1. Inhibits host ISG transcription by sequestering host ISGF3 in a PML- and STAT2- binding dependent manner. Alters host cell cycle progression, probably through its interaction with host E2F1 or RB1 that overcomes the RB1-mediated repression of E2F-responsive promoters. May act as a E3 ubiquitin ligase targeting several host proteins including HES1 and SP100A for ubiquitination and subsequent proteasomal degradation. Impairs the radial migration of immature neurons by downregulating Gap junction alpha-1 protein/GJA1 also via ubiquitination and degradation. The protein is Immediate early protein IE1 (UL123) of Human cytomegalovirus (strain Towne) (HHV-5).